A 204-amino-acid polypeptide reads, in one-letter code: NAD(P)H dehydrogenase (quinone) (204 aa).

One can recognise a Flavodoxin-like domain in the interval 3-194 (VLIVFYSMYG…AGARYQGRHV (192 aa)). Residues 9–14 (SMYGHI) and 82–84 (TRF) contribute to the FMN site. Tyr-11 is an NAD(+) binding site. A substrate-binding site is contributed by Trp-102. Position 138 (His-138) interacts with FMN.

Belongs to the WrbA family. FMN is required as a cofactor.

The enzyme catalyses a quinone + NADH + H(+) = a quinol + NAD(+). The catalysed reaction is a quinone + NADPH + H(+) = a quinol + NADP(+). The sequence is that of NAD(P)H dehydrogenase (quinone) from Syntrophobacter fumaroxidans (strain DSM 10017 / MPOB).